The following is a 408-amino-acid chain: Putative F-box protein At1g53550 (408 aa).

The region spanning 29 to 74 (TCYFDPIPVDLVINILSRLSLECIARCRCVSKLWSSIIRRPNYNQL) is the F-box domain.

This is Putative F-box protein At1g53550 from Arabidopsis thaliana (Mouse-ear cress).